We begin with the raw amino-acid sequence, 329 residues long: Indolepyruvate C-methyltransferase (329 aa).

Belongs to the methyltransferase superfamily.

The enzyme catalyses indole-3-pyruvate + S-adenosyl-L-methionine = (R)-3-(indol-3-yl)-2-oxobutanoate + S-adenosyl-L-homocysteine + H(+). Its activity is regulated as follows. Strongly inhibited by the thiol reagents p-chloromercuribenzoate and N-ethylmaleimide. Partially inhibited by o-phenanthroline and 2,2'-dipyridyl. Competitively inhibited by L-tryptophan and indolmycin. Involved in the biosynthesis of the antibiotic indolmycin, an inhibitor of the bacterial tryptophan-tRNA synthetases. Catalyzes the transfer of a methyl group from S-adenosyl-L-methionine to position 3 of the aliphatic side chain of (indol-3-yl)pyruvate to yield 3-methylindolepyruvate. This Streptomyces griseus protein is Indolepyruvate C-methyltransferase.